Reading from the N-terminus, the 208-residue chain is Exosome complex component CSL4 homolog (208 aa).

As to quaternary structure, component of the RNA exosome complex. As to expression, ubiquitously expressed.

The protein localises to the nucleus. It is found in the nucleolus. It localises to the nucleoplasm. Functionally, non-catalytic component of the RNA exosome complex which has 3'-&gt;5' exoribonuclease activity and participates in a multitude of cellular RNA processing and degradation events. Involved in regulation of antisense ribosomal siRNA production. Involved in response to cold-warm shock. The sequence is that of Exosome complex component CSL4 homolog from Caenorhabditis elegans.